The sequence spans 418 residues: Ankyrin repeat domain-containing protein 61 (418 aa).

8 ANK repeats span residues 27–57 (ALHS…NQPL), 74–103 (QPIF…DPEV), 131–160 (TRIQ…QVNA), 166–195 (NKHS…QVNA), 199–228 (SSMT…NVNC), 233–272 (TGNT…QVNA), 276–305 (EGQT…NVNI), and 309–342 (NGES…PLRL).

The chain is Ankyrin repeat domain-containing protein 61 (Ankrd61) from Rattus norvegicus (Rat).